The chain runs to 242 residues: Protein HTATIP2 (242 aa).

A2 carries the post-translational modification N-acetylalanine. The tract at residues 2–25 (AETEALSKLREDFRMQNKSVFILG) is required for interaction with elongation factor EEF1A1. NADPH-binding residues include S27, G28, E29, T30, R52, R53, L92, G93, Y143, K147, and R178. Y143 functions as the Proton acceptor in the catalytic mechanism. The active site involves K147.

Monomer. Forms homodimers during oxidative stress. Interacts (via N-terminus) with elongation factor EEF1A1 (via middle-region); the interaction is direct and competes with EEF1A1 binding to guanyl-nucleotide exchange factor EEF1B2, thereby inhibiting GDP for GTP exchange and reactivation of EEF1A1. Interacts with nuclear transport receptors XPO4, IPO5/RANBP5, IPO7, IPO9 and KPNB1 as well as GCN1L1/GCN1 and LRPPRC probably through their HEAT repeats. Binds NCOA5/CIA.

Its subcellular location is the cytoplasm. In terms of biological role, represses translation by preventing reactivation of elongation factor eEF1A. May also inhibit nuclear import by competing with nuclear import substrates for binding to a subset of nuclear transport receptors. Has additionally been proposed to act as a redox sensor involved in cellular oxidative stress surveillance. The polypeptide is Protein HTATIP2 (HTATIP2) (Pan paniscus (Pygmy chimpanzee)).